A 160-amino-acid polypeptide reads, in one-letter code: Nucleotide-binding protein MADE_1020535 (160 aa).

Belongs to the YajQ family.

Its function is as follows. Nucleotide-binding protein. This Alteromonas mediterranea (strain DSM 17117 / CIP 110805 / LMG 28347 / Deep ecotype) protein is Nucleotide-binding protein MADE_1020535.